The primary structure comprises 371 residues: Cytochrome b (371 aa).

The next 4 helical transmembrane spans lie at Phe-25–Ile-45, Trp-69–Ile-90, Trp-105–Leu-125, and Phe-170–Ile-190. Residues His-75 and His-89 each coordinate heme b. Positions 174 and 188 each coordinate heme b. His-193 serves as a coordination point for a ubiquinone. 4 consecutive transmembrane segments (helical) span residues Tyr-218–Ser-238, Leu-280–His-300, Leu-312–Thr-332, and Phe-339–Pro-358.

Belongs to the cytochrome b family. In terms of assembly, the cytochrome bc1 complex contains 3 respiratory subunits (MT-CYB, CYC1 and UQCRFS1), 2 core proteins (UQCRC1 and UQCRC2) and probably 6 low-molecular weight proteins. It depends on heme b as a cofactor.

The protein resides in the mitochondrion inner membrane. Component of the ubiquinol-cytochrome c reductase complex (complex III or cytochrome b-c1 complex) that is part of the mitochondrial respiratory chain. The b-c1 complex mediates electron transfer from ubiquinol to cytochrome c. Contributes to the generation of a proton gradient across the mitochondrial membrane that is then used for ATP synthesis. This chain is Cytochrome b (MT-CYB), found in Micrurus tener microgalbineus (Spotted coral snake).